The primary structure comprises 454 residues: Asparagine--tRNA ligase (454 aa).

Belongs to the class-II aminoacyl-tRNA synthetase family. In terms of assembly, homodimer.

It localises to the cytoplasm. The catalysed reaction is tRNA(Asn) + L-asparagine + ATP = L-asparaginyl-tRNA(Asn) + AMP + diphosphate + H(+). In Mesoplasma florum (strain ATCC 33453 / NBRC 100688 / NCTC 11704 / L1) (Acholeplasma florum), this protein is Asparagine--tRNA ligase.